Consider the following 223-residue polypeptide: UPF0502 protein Sbal_1765 (223 aa).

It belongs to the UPF0502 family.

This Shewanella baltica (strain OS155 / ATCC BAA-1091) protein is UPF0502 protein Sbal_1765.